A 187-amino-acid polypeptide reads, in one-letter code: NADH-quinone oxidoreductase subunit B (187 aa).

Residues 1–10 (MTADHNRALH) show a composition bias toward basic and acidic residues. Residues 1 to 22 (MTADHNRALHDAPTARGGEVRQ) are disordered. [4Fe-4S] cluster contacts are provided by cysteine 66, cysteine 67, cysteine 131, and cysteine 161.

This sequence belongs to the complex I 20 kDa subunit family. NDH-1 is composed of 14 different subunits. Subunits NuoB, C, D, E, F, and G constitute the peripheral sector of the complex. The cofactor is [4Fe-4S] cluster.

The protein resides in the cell inner membrane. The enzyme catalyses a quinone + NADH + 5 H(+)(in) = a quinol + NAD(+) + 4 H(+)(out). Functionally, NDH-1 shuttles electrons from NADH, via FMN and iron-sulfur (Fe-S) centers, to quinones in the respiratory chain. Couples the redox reaction to proton translocation (for every two electrons transferred, four hydrogen ions are translocated across the cytoplasmic membrane), and thus conserves the redox energy in a proton gradient. This chain is NADH-quinone oxidoreductase subunit B, found in Erythrobacter litoralis (strain HTCC2594).